The chain runs to 479 residues: mRNA export factor ICP27 homolog (479 aa).

The span at 1 to 15 (MVPSQRLSRTSSISS) shows a compositional bias: low complexity. Disordered stretches follow at residues 1 to 77 (MVPS…PSSV) and 91 to 210 (KKWD…NKPW). Residues 35–44 (TDCDLDPMEG) show a composition bias toward acidic residues. The interval 61–146 (DEDPTPAHAI…TDESYGKRRH (86 aa)) is nuclear export signal and interaction with host NXF1. The interval 127–130 (KRRR) is nuclear localization signal. Residues 132–142 (EVHGCTDESYG) show a composition bias toward basic and acidic residues. A nuclear localization signal region spans residues 143–145 (KRR). The Zn(2+) site is built by C354, H445, C449, and C454. The segment at 354–454 (CFLPNTRDYN…HTRDCRSASC (101 aa)) adopts a CHC2-type zinc-finger fold.

It belongs to the HHV-1 ICP27 protein family. Interacts with host XPO1 and with the XPO1 export pathway components small GTPase RAN and nucleoporin NUP214. Interacts with host SPEN, OTT1 and OTT3. Interacts with host SRSF1, SRSF3, SRSF7 and SRPK1. Interacts with host DHX9; this interaction may have an inhibitory effect on virion production. Interacts (via N-terminus) with host NXF1; this interaction plays a role in mRNA export. In terms of processing, phosphorylated by cellular protein kinase CK2.

It localises to the host nucleus. Its subcellular location is the host cytoplasm. Its function is as follows. Promotes the nuclear export of a subset of early and late viral mRNAs by interacting with mRNAs and cellular export proteins. Additionally may prevent the establishment of cellular antiviral state, by acting as an alternative splicing factor for cellular RNAs such as STAT1, resulting in a STAT1 mRNA incapable of producing the STAT1alpha isoform. This chain is mRNA export factor ICP27 homolog, found in Homo sapiens (Human).